An 871-amino-acid chain; its full sequence is Pre-mRNA-processing factor 40 homolog B (871 aa).

WW domains follow at residues 92-125 (GPPR…KPSV) and 133-166 (LLSQ…RPKD). Lys-148 bears the N6-acetyllysine mark. The disordered stretch occupies residues 171 to 277 (EVLVKQEAAG…RSGLSWSNRE (107 aa)). A Glycyl lysine isopeptide (Lys-Gly) (interchain with G-Cter in SUMO2) cross-link involves residue Lys-175. Residues 182 to 191 (QQQQLPQTLQ) show a composition bias toward low complexity. Positions 192 to 211 (PQPPQPQPDPPPVPPGPTPV) are enriched in pro residues. 2 stretches are compositionally biased toward low complexity: residues 212-221 (PTGLLEPEPG) and 245-255 (EGPSSSGQHQP). FF domains follow at residues 276 to 330 (REKA…YKAQ), 340 to 397 (RLRA…VLFF), 410 to 470 (RRRN…HIRA), 490 to 550 (QRKN…YVEE), 554 to 610 (RFHD…LLEK), and 625 to 682 (RMRR…FLQV). The interval 690-871 (HLHTKGRKHG…TLLQQLDDHQ (182 aa)) is disordered. The span at 691–711 (LHTKGRKHGRKGKKHHHKRSH) shows a compositional bias: basic residues. Residues 739-756 (SESGSEPSSSLDSVESGG) show a composition bias toward low complexity. Ser-764 carries the post-translational modification Phosphoserine. A compositionally biased stretch (basic residues) spans 777 to 793 (RKAKKPKKKTKKRRHKS). Positions 803–824 (EEKAGKESDEKEQEQDKDRELQ) are enriched in basic and acidic residues. A Phosphoserine modification is found at Ser-832. Residue Lys-838 forms a Glycyl lysine isopeptide (Lys-Gly) (interchain with G-Cter in SUMO2) linkage. Ser-852 carries the post-translational modification Phosphoserine.

It belongs to the PRPF40 family. As to quaternary structure, interacts with the N-terminus of HD. As to expression, expressed in the striatum and cortex of the brain (at protein level). Highly expressed in testis, fetal kidney and fetal brain. Moderately expressed in pancreas, skeletal muscle, placenta, brain and heart. Weakly expressed in colon, ileum, ovary, prostate, spleen, kidney and fetal lung.

The protein localises to the nucleus speckle. Functionally, may be involved in pre-mRNA splicing. The polypeptide is Pre-mRNA-processing factor 40 homolog B (PRPF40B) (Homo sapiens (Human)).